The sequence spans 366 residues: Holliday junction branch migration complex subunit RuvB (366 aa).

Residues 3–183 (ADGLVSAAAS…FGFTAHLDFY (181 aa)) are large ATPase domain (RuvB-L). Residues Leu22, Arg23, Gly64, Lys67, Thr68, Ser69, 130–132 (EDF), Arg173, Tyr183, and Arg220 each bind ATP. Thr68 is a Mg(2+) binding site. Positions 184–254 (APDELARVLT…VARAALRIYD (71 aa)) are small ATPAse domain (RuvB-S). Residues 257–366 (GLGLDRLDRA…PEDGLHPGGG (110 aa)) are head domain (RuvB-H). Residues Arg312 and Arg317 each contribute to the DNA site.

It belongs to the RuvB family. Homohexamer. Forms an RuvA(8)-RuvB(12)-Holliday junction (HJ) complex. HJ DNA is sandwiched between 2 RuvA tetramers; dsDNA enters through RuvA and exits via RuvB. An RuvB hexamer assembles on each DNA strand where it exits the tetramer. Each RuvB hexamer is contacted by two RuvA subunits (via domain III) on 2 adjacent RuvB subunits; this complex drives branch migration. In the full resolvosome a probable DNA-RuvA(4)-RuvB(12)-RuvC(2) complex forms which resolves the HJ.

It is found in the cytoplasm. The catalysed reaction is ATP + H2O = ADP + phosphate + H(+). The RuvA-RuvB-RuvC complex processes Holliday junction (HJ) DNA during genetic recombination and DNA repair, while the RuvA-RuvB complex plays an important role in the rescue of blocked DNA replication forks via replication fork reversal (RFR). RuvA specifically binds to HJ cruciform DNA, conferring on it an open structure. The RuvB hexamer acts as an ATP-dependent pump, pulling dsDNA into and through the RuvAB complex. RuvB forms 2 homohexamers on either side of HJ DNA bound by 1 or 2 RuvA tetramers; 4 subunits per hexamer contact DNA at a time. Coordinated motions by a converter formed by DNA-disengaged RuvB subunits stimulates ATP hydrolysis and nucleotide exchange. Immobilization of the converter enables RuvB to convert the ATP-contained energy into a lever motion, pulling 2 nucleotides of DNA out of the RuvA tetramer per ATP hydrolyzed, thus driving DNA branch migration. The RuvB motors rotate together with the DNA substrate, which together with the progressing nucleotide cycle form the mechanistic basis for DNA recombination by continuous HJ branch migration. Branch migration allows RuvC to scan DNA until it finds its consensus sequence, where it cleaves and resolves cruciform DNA. The protein is Holliday junction branch migration complex subunit RuvB of Frankia alni (strain DSM 45986 / CECT 9034 / ACN14a).